The following is a 124-amino-acid chain: Small ribosomal subunit protein uS12 (124 aa).

Positions methionine 1 to glutamine 25 are disordered. The residue at position 89 (aspartate 89) is a 3-methylthioaspartic acid.

It belongs to the universal ribosomal protein uS12 family. In terms of assembly, part of the 30S ribosomal subunit. Contacts proteins S8 and S17. May interact with IF1 in the 30S initiation complex.

Its function is as follows. With S4 and S5 plays an important role in translational accuracy. Functionally, interacts with and stabilizes bases of the 16S rRNA that are involved in tRNA selection in the A site and with the mRNA backbone. Located at the interface of the 30S and 50S subunits, it traverses the body of the 30S subunit contacting proteins on the other side and probably holding the rRNA structure together. The combined cluster of proteins S8, S12 and S17 appears to hold together the shoulder and platform of the 30S subunit. This chain is Small ribosomal subunit protein uS12, found in Borrelia duttonii (strain Ly).